A 463-amino-acid polypeptide reads, in one-letter code: L-seryl-tRNA(Sec) selenium transferase (463 aa).

K295 carries the N6-(pyridoxal phosphate)lysine modification.

It belongs to the SelA family. As to quaternary structure, homodecamer; pentamer of dimers. Binds only one seryl-tRNA(Sec) per dimer. It depends on pyridoxal 5'-phosphate as a cofactor.

The protein localises to the cytoplasm. The enzyme catalyses L-seryl-tRNA(Sec) + selenophosphate + H(+) = L-selenocysteinyl-tRNA(Sec) + phosphate. Its pathway is aminoacyl-tRNA biosynthesis; selenocysteinyl-tRNA(Sec) biosynthesis; selenocysteinyl-tRNA(Sec) from L-seryl-tRNA(Sec) (bacterial route): step 1/1. In terms of biological role, converts seryl-tRNA(Sec) to selenocysteinyl-tRNA(Sec) required for selenoprotein biosynthesis. This Escherichia coli (strain K12 / MC4100 / BW2952) protein is L-seryl-tRNA(Sec) selenium transferase.